Reading from the N-terminus, the 187-residue chain is Nucleoside-triphosphatase THEP1 (187 aa).

ATP contacts are provided by residues Gly-9–Thr-16 and Leu-100–Gly-107.

Belongs to the THEP1 NTPase family.

It carries out the reaction a ribonucleoside 5'-triphosphate + H2O = a ribonucleoside 5'-diphosphate + phosphate + H(+). In terms of biological role, has nucleotide phosphatase activity towards ATP, GTP, CTP, TTP and UTP. May hydrolyze nucleoside diphosphates with lower efficiency. The sequence is that of Nucleoside-triphosphatase THEP1 from Hyperthermus butylicus (strain DSM 5456 / JCM 9403 / PLM1-5).